The following is a 126-amino-acid chain: Glycine cleavage system H protein (126 aa).

Residues 23–104 enclose the Lipoyl-binding domain; sequence KVRVGITDFA…YDEGWMIEII (82 aa). Lysine 64 is subject to N6-lipoyllysine.

The protein belongs to the GcvH family. In terms of assembly, the glycine cleavage system is composed of four proteins: P, T, L and H. (R)-lipoate is required as a cofactor.

Functionally, the glycine cleavage system catalyzes the degradation of glycine. The H protein shuttles the methylamine group of glycine from the P protein to the T protein. The polypeptide is Glycine cleavage system H protein (Chlorobium phaeobacteroides (strain BS1)).